The chain runs to 131 residues: Fluoride-specific ion channel FluC (131 aa).

Transmembrane regions (helical) follow at residues 4–24 (LWIM…TGFV), 30–50 (GIFP…IGFF), 68–88 (LFVM…SLQT), and 104–124 (IALS…VAVA). Na(+)-binding residues include glycine 76 and threonine 79.

Belongs to the fluoride channel Fluc/FEX (TC 1.A.43) family.

The protein localises to the cell inner membrane. It carries out the reaction fluoride(in) = fluoride(out). With respect to regulation, na(+) is not transported, but it plays an essential structural role and its presence is essential for fluoride channel function. Fluoride-specific ion channel. Important for reducing fluoride concentration in the cell, thus reducing its toxicity. In Methylocella silvestris (strain DSM 15510 / CIP 108128 / LMG 27833 / NCIMB 13906 / BL2), this protein is Fluoride-specific ion channel FluC.